Consider the following 287-residue polypeptide: Ribosomal RNA small subunit methyltransferase A (287 aa).

Polar residues predominate over residues 1–15 (MSKTTFDAQSITNSL). The interval 1 to 20 (MSKTTFDAQSITNSLRAAKH) is disordered. N29, L31, G56, E77, and N126 together coordinate S-adenosyl-L-methionine.

Belongs to the class I-like SAM-binding methyltransferase superfamily. rRNA adenine N(6)-methyltransferase family. RsmA subfamily.

The protein resides in the cytoplasm. The enzyme catalyses adenosine(1518)/adenosine(1519) in 16S rRNA + 4 S-adenosyl-L-methionine = N(6)-dimethyladenosine(1518)/N(6)-dimethyladenosine(1519) in 16S rRNA + 4 S-adenosyl-L-homocysteine + 4 H(+). Specifically dimethylates two adjacent adenosines (A1518 and A1519) in the loop of a conserved hairpin near the 3'-end of 16S rRNA in the 30S particle. May play a critical role in biogenesis of 30S subunits. The sequence is that of Ribosomal RNA small subunit methyltransferase A from Psychrobacter cryohalolentis (strain ATCC BAA-1226 / DSM 17306 / VKM B-2378 / K5).